The sequence spans 823 residues: MGEEFKPAIQEKRWDIGEEEKLLSLWDAEDLHKSTLDPDDPREIVVIDTPPPYPSGKWHVGGAAHYTQIDMIARYFRLKGYNVVAPFYADRNGLPVEVQVEKTYGVVAHEMARTTEGRERFLALCSEFLDKVESEIVQLWRRLGCGFDYWREGTDSPRYRSMTQATFIDLWRRGLIYEAERPVRWCPRCKTTLAEAEIEHKEDEDFIYYVKYRLEEDGRDLVVATTRPELLAGCAALAYHPEDERYKGLAGKTAIAPLYGHRVKIVEHPAVKKDFGTGLMMICSYGDEEDVRLFLELDLKPKVLIDENGVMNENAGPIAGLPVKEARRRIAEILEREGLLVKKERIVHSVPVCWRCKTPLQIIHRRELFLRQLDFKDAVKQAAAKMDFKPEMHRKKLYDWIDSIKMDWPISRERFYGTEIPLWTCEKCGAKLVPEPGRYYRPWAEEPPWDSCPRCGAPRRYLKGETRVFDTWFDSSISPLYVTRWMWDKRFYERASRNVLRPQGQDIIRTWLYYSILRVLQLTGKPAFRWVRITGLGLDPKGRPMHKSLGNVIDPEPIIAKYGGDAFRFWAAIAAKLGYDYRFDENKVKTGRNFATKLWNLARFVSSFPRPEGSPLEKATEVDKAFLALADEYLEAADKAYGELDVYEPANLIYELAWDIFASHYVELVKERSYNRSGLFTREEQEAAWATLHELLRRILVALSPIMPFVTDAIHRRLYGSSVHRQRWPDPLFTPEERRELAGKARLIVSVNKAVWNLKRSMGKKLYEPLDTVEVLVPSGIESARRDLEALHKAAIRTYTGAPPEGSEEAIPGSSVYYIAKKS.

Residue Lys547 participates in ATP binding.

This sequence belongs to the class-I aminoacyl-tRNA synthetase family. ValS type 2 subfamily.

The protein resides in the cytoplasm. It carries out the reaction tRNA(Val) + L-valine + ATP = L-valyl-tRNA(Val) + AMP + diphosphate. In terms of biological role, catalyzes the attachment of valine to tRNA(Val). As ValRS can inadvertently accommodate and process structurally similar amino acids such as threonine, to avoid such errors, it has a 'posttransfer' editing activity that hydrolyzes mischarged Thr-tRNA(Val) in a tRNA-dependent manner. The sequence is that of Valine--tRNA ligase (valS) from Aeropyrum pernix (strain ATCC 700893 / DSM 11879 / JCM 9820 / NBRC 100138 / K1).